We begin with the raw amino-acid sequence, 218 residues long: Protein-L-isoaspartate O-methyltransferase 1 (218 aa).

Ser69 is an active-site residue.

The protein belongs to the methyltransferase superfamily. L-isoaspartyl/D-aspartyl protein methyltransferase family.

The protein resides in the cytoplasm. The catalysed reaction is [protein]-L-isoaspartate + S-adenosyl-L-methionine = [protein]-L-isoaspartate alpha-methyl ester + S-adenosyl-L-homocysteine. Functionally, catalyzes the methyl esterification of L-isoaspartyl residues in peptides and proteins that result from spontaneous decomposition of normal L-aspartyl and L-asparaginyl residues. It plays a role in the repair and/or degradation of damaged proteins. The protein is Protein-L-isoaspartate O-methyltransferase 1 of Marinobacter nauticus (strain ATCC 700491 / DSM 11845 / VT8) (Marinobacter aquaeolei).